The primary structure comprises 459 residues: Spermidine/putrescine import ATP-binding protein PotA (459 aa).

Residues 15–334 enclose the ABC transporter domain; it reads IELIDIVKQF…PRNIWVAKFI (320 aa). Position 47–54 (47–54) interacts with ATP; sequence GPSGSGKT. The insert stretch occupies residues 115–203; sequence RVPKENVKKE…EEFKNKYFKR (89 aa).

Belongs to the ABC transporter superfamily. Spermidine/putrescine importer (TC 3.A.1.11.1) family. In terms of assembly, the complex is composed of two ATP-binding proteins (PotA), two transmembrane proteins (PotB and PotC) and a solute-binding protein (PotD).

It is found in the cell membrane. It carries out the reaction ATP + H2O + polyamine-[polyamine-binding protein]Side 1 = ADP + phosphate + polyamineSide 2 + [polyamine-binding protein]Side 1.. Functionally, part of the ABC transporter complex PotABCD involved in spermidine/putrescine import. Responsible for energy coupling to the transport system. The sequence is that of Spermidine/putrescine import ATP-binding protein PotA from Mycoplasmopsis synoviae (strain 53) (Mycoplasma synoviae).